An 834-amino-acid chain; its full sequence is uncharacterized protein (834 aa).

Disordered stretches follow at residues 1 to 38, 166 to 280, and 767 to 787; these read MGSL…KAQP, DLSS…TPQE, and ISRV…NFHP. Composition is skewed to low complexity over residues 7-18 and 166-252; these read SSKNNSSLGSIS and DLSS…SSSS.

This sequence belongs to the IIV-6 268L family.

This is an uncharacterized protein from Invertebrate iridescent virus 3 (IIV-3).